The primary structure comprises 396 residues: Enoyl-[acyl-carrier-protein] reductase [NADH] (396 aa).

NAD(+) contacts are provided by residues 47-52, 73-74, 110-111, and 138-139; these read GASTGF, FE, DA, and LA. Tyrosine 224 contributes to the substrate binding site. Catalysis depends on tyrosine 234, which acts as the Proton donor. NAD(+)-binding positions include lysine 243 and 272-274; that span reads LVT.

Belongs to the TER reductase family. Monomer.

It catalyses the reaction a 2,3-saturated acyl-[ACP] + NAD(+) = a (2E)-enoyl-[ACP] + NADH + H(+). It functions in the pathway lipid metabolism; fatty acid biosynthesis. In terms of biological role, involved in the final reduction of the elongation cycle of fatty acid synthesis (FAS II). Catalyzes the reduction of a carbon-carbon double bond in an enoyl moiety that is covalently linked to an acyl carrier protein (ACP). The polypeptide is Enoyl-[acyl-carrier-protein] reductase [NADH] (Flavobacterium johnsoniae (strain ATCC 17061 / DSM 2064 / JCM 8514 / BCRC 14874 / CCUG 350202 / NBRC 14942 / NCIMB 11054 / UW101) (Cytophaga johnsonae)).